Here is a 306-residue protein sequence, read N- to C-terminus: Flavin adenine dinucleotide synthase (306 aa).

FAD-binding positions include S59, I107, G164, 182–185 (DSNW), R190, and R300.

It belongs to the PAPS reductase family. FAD1 subfamily.

It localises to the cytoplasm. The enzyme catalyses FMN + ATP + H(+) = FAD + diphosphate. It participates in cofactor biosynthesis; FAD biosynthesis; FAD from FMN: step 1/1. In terms of biological role, catalyzes the adenylation of flavin mononucleotide (FMN) to form flavin adenine dinucleotide (FAD) coenzyme. The chain is Flavin adenine dinucleotide synthase from Saccharomyces cerevisiae (strain ATCC 204508 / S288c) (Baker's yeast).